The chain runs to 396 residues: Probable glucan endo-1,6-beta-glucosidase B (396 aa).

The first 17 residues, 1 to 17 (MIRRLAAFSALSGLATA), serve as a signal peptide directing secretion. The N-linked (GlcNAc...) asparagine glycan is linked to Asn30. The Proton donor role is filled by Glu219. A glycan (N-linked (GlcNAc...) asparagine) is linked at Asn272. Glu320 functions as the Nucleophile in the catalytic mechanism.

This sequence belongs to the glycosyl hydrolase 5 (cellulase A) family.

The protein resides in the secreted. The enzyme catalyses Random hydrolysis of (1-&gt;6)-linkages in (1-&gt;6)-beta-D-glucans.. In terms of biological role, beta-glucanases participate in the metabolism of beta-glucan, the main structural component of the cell wall. Acts on lutean, pustulan and 1,6-oligo-beta-D-glucosides. This is Probable glucan endo-1,6-beta-glucosidase B (exgB) from Aspergillus fumigatus (strain ATCC MYA-4609 / CBS 101355 / FGSC A1100 / Af293) (Neosartorya fumigata).